Consider the following 210-residue polypeptide: T-cell surface glycoprotein CD8 beta chain (210 aa).

An N-terminal signal peptide occupies residues 1-21 (MRPRLWLLLAAQLTVLHGNSV). An Ig-like V-type domain is found at 22-132 (LQQTPAYIKV…ELTFGKGTQL (111 aa)). The Extracellular portion of the chain corresponds to 22–170 (LQQTPAYIKV…ETQKGPLCSP (149 aa)). An intrachain disulfide couples cysteine 41 to cysteine 116. Residue asparagine 102 is glycosylated (N-linked (GlcNAc...) asparagine). Residues 171–191 (ITLGLLVAGVLVLLVSLGVAI) form a helical membrane-spanning segment. Topologically, residues 192–210 (HLCCRRRRARLRFMKQFYK) are cytoplasmic. Phosphotyrosine is present on tyrosine 209.

In terms of assembly, forms disulfide-linked heterodimers with CD8A at the cell surface. Interacts with CD3D; this interaction couples TCR-CD3 with CD8. Interacts with LCK. In terms of processing, phosphorylated as a consequence of T-cell activation. Palmitoylated at the cytoplasmic tail and thereby targets the heterodimer CD8A/CD8B to lipid rafts unlike CD8A homodimers. As to expression, isoform 1, isoform 3, isoform 5, isoform 6, isoform 7 and isoform 8 are expressed in both thymus and peripheral CD8+ T-cells. Expression of isoform 1 is higher in thymus CD8+ T-cells than in peripheral CD8+ T-cells. Expression of isoform 6 is higher in peripheral CD8+ T-cells than in thymus CD8+ T-cells.

It is found in the cell membrane. Its subcellular location is the secreted. In terms of biological role, integral membrane glycoprotein that plays an essential role in the immune response and serves multiple functions in responses against both external and internal offenses. In T-cells, functions primarily as a coreceptor for MHC class I molecule:peptide complex. The antigens presented by class I peptides are derived from cytosolic proteins while class II derived from extracellular proteins. Interacts simultaneously with the T-cell receptor (TCR) and the MHC class I proteins presented by antigen presenting cells (APCs). In turn, recruits the Src kinase LCK to the vicinity of the TCR-CD3 complex. A palmitoylation site in the cytoplasmic tail of CD8B chain contributes to partitioning of CD8 into the plasma membrane lipid rafts where signaling proteins are enriched. Once LCK recruited, it initiates different intracellular signaling pathways by phosphorylating various substrates ultimately leading to lymphokine production, motility, adhesion and activation of cytotoxic T-lymphocytes (CTLs). Additionally, plays a critical role in thymic selection of CD8+ T-cells. The chain is T-cell surface glycoprotein CD8 beta chain (CD8B) from Homo sapiens (Human).